The chain runs to 326 residues: MIEKSQACHDSLLDSVGQTPMVQLHQLFPKHEVFAKLEYMNPGGSMKDRPAKYIIEHGIKHGLITENTHLIESTSGNLGIALAMIAKIKGLKLTCVVDPKISPTNLKIIKSYGANVEMVEEPDAHGGYLMTRIAKVQELLATIDDAYWINQYANELNWQSHYHGAGTEIVETIKQPIDYFVAPVSTTGSIMGMSRKIKEGHPNAQIVAVDAKGSVIFGDKPINRELPGIGASRVPEILNRSEINQVIHVDDYQSALGCRKLIDYEGIFAGGSTGSIIAAIEQLITSIEEGATIVTILPDRGDRYLDLVYSDTWLEKMKSRQGVKSE.

Lys-47 carries the post-translational modification N6-(pyridoxal phosphate)lysine. Pyridoxal 5'-phosphate is bound by residues Asn-77, 185–189 (STTGS), and Ser-272.

It belongs to the cysteine synthase/cystathionine beta-synthase family. SbnA subfamily. As to quaternary structure, homodimer. It depends on pyridoxal 5'-phosphate as a cofactor.

It catalyses the reaction O-phospho-L-serine + L-glutamate = N-[(2S)-2-amino-2-carboxyethyl]-L-glutamate + phosphate + H(+). Its pathway is siderophore biosynthesis. Catalyzes the synthesis of N-((2S)-2-amino-2-carboxyethyl)-L-glutamate (ACEGA) from O-phospho-L-serine and L-glutamate. Involved in the biosynthesis of L-2,3-diaminopropionic acid (L-Dap), a precursor of staphyloferrin B and antibiotics. This chain is N-(2-amino-2-carboxyethyl)-L-glutamate synthase (sbnA), found in Staphylococcus aureus (strain N315).